Consider the following 111-residue polypeptide: Translation initiation factor 1A 1 (111 aa).

The tract at residues 1–26 (MTLADLKKPTSRATPSTEETFTRVRT) is disordered. One can recognise an S1-like domain in the interval 22–96 (TRVRTPRREN…EKADVIWKYT (75 aa)).

This sequence belongs to the eIF-1A family.

Functionally, seems to be required for maximal rate of protein biosynthesis. Enhances ribosome dissociation into subunits and stabilizes the binding of the initiator Met-tRNA(I) to 40 S ribosomal subunits. The sequence is that of Translation initiation factor 1A 1 (eIF1A1) from Methanosarcina acetivorans (strain ATCC 35395 / DSM 2834 / JCM 12185 / C2A).